Consider the following 497-residue polypeptide: 4,4'-diaponeurosporene oxygenase (497 aa).

7 to 19 is an FAD binding site; sequence VIGGGLGGISAAI.

This sequence belongs to the carotenoid/retinoid oxidoreductase family. CrtP subfamily. FAD is required as a cofactor.

It catalyses the reaction all-trans-4,4'-diaponeurosporene + 2 AH2 + 2 O2 = 4,4'-diaponeurosporenal + 2 A + 3 H2O. Its pathway is carotenoid biosynthesis; staphyloxanthin biosynthesis; staphyloxanthin from farnesyl diphosphate: step 3/5. Functionally, involved in the biosynthesis of the yellow-orange carotenoid staphyloxanthin, which plays a role in the virulence via its protective function against oxidative stress. Catalyzes the oxidation of the terminal methyl side group of 4,4'-diaponeurosporene to form 4,4'-diaponeurosporen-4-al. The polypeptide is 4,4'-diaponeurosporene oxygenase (Staphylococcus aureus (strain MSSA476)).